The chain runs to 477 residues: Bifunctional protein HldE (477 aa).

The interval 1-319 (MKITLPPFDQ…RALQEQEQSG (319 aa)) is ribokinase. 195–198 (NLAE) serves as a coordination point for ATP. Residue Asp264 is part of the active site. Positions 344-477 (MTNGCFDLLH…IERMQSAPDT (134 aa)) are cytidylyltransferase.

In the N-terminal section; belongs to the carbohydrate kinase PfkB family. The protein in the C-terminal section; belongs to the cytidylyltransferase family. Homodimer.

It catalyses the reaction D-glycero-beta-D-manno-heptose 7-phosphate + ATP = D-glycero-beta-D-manno-heptose 1,7-bisphosphate + ADP + H(+). It carries out the reaction D-glycero-beta-D-manno-heptose 1-phosphate + ATP + H(+) = ADP-D-glycero-beta-D-manno-heptose + diphosphate. Its pathway is nucleotide-sugar biosynthesis; ADP-L-glycero-beta-D-manno-heptose biosynthesis; ADP-L-glycero-beta-D-manno-heptose from D-glycero-beta-D-manno-heptose 7-phosphate: step 1/4. It participates in nucleotide-sugar biosynthesis; ADP-L-glycero-beta-D-manno-heptose biosynthesis; ADP-L-glycero-beta-D-manno-heptose from D-glycero-beta-D-manno-heptose 7-phosphate: step 3/4. Its function is as follows. Catalyzes the phosphorylation of D-glycero-D-manno-heptose 7-phosphate at the C-1 position to selectively form D-glycero-beta-D-manno-heptose-1,7-bisphosphate. Catalyzes the ADP transfer from ATP to D-glycero-beta-D-manno-heptose 1-phosphate, yielding ADP-D-glycero-beta-D-manno-heptose. The chain is Bifunctional protein HldE from Alkalilimnicola ehrlichii (strain ATCC BAA-1101 / DSM 17681 / MLHE-1).